We begin with the raw amino-acid sequence, 525 residues long: GMP synthase [glutamine-hydrolyzing] (525 aa).

Residues 16 to 205 (PVLVVDFGAQ…LHDFAGIGAR (190 aa)) form the Glutamine amidotransferase type-1 domain. Cys93 acts as the Nucleophile in catalysis. Active-site residues include His179 and Glu181. Residues 206-399 (WTPANIANAL…LGLPEEIVAR (194 aa)) form the GMPS ATP-PPase domain. 233-239 (SGGVDSA) contributes to the ATP binding site.

Homodimer.

It catalyses the reaction XMP + L-glutamine + ATP + H2O = GMP + L-glutamate + AMP + diphosphate + 2 H(+). It participates in purine metabolism; GMP biosynthesis; GMP from XMP (L-Gln route): step 1/1. Functionally, catalyzes the synthesis of GMP from XMP. In Mycobacterium marinum (strain ATCC BAA-535 / M), this protein is GMP synthase [glutamine-hydrolyzing].